The following is a 610-amino-acid chain: Myoneurin (610 aa).

The BTB domain occupies 24-89 (CDCTIVIGEF…IYTGTLNLDS (66 aa)). Residues 169–197 (QGALAKKSSQTKKKKKAFNSPKTGQNKTV) are disordered. Short sequence motifs (nuclear localization signal) lie at residues 174-190 (KKSSQTKKKKKAFNSPK) and 257-262 (KRKRGK). Positions 188–197 (SPKTGQNKTV) are enriched in polar residues. Serine 289 carries the phosphoserine modification. 8 C2H2-type zinc fingers span residues 302 to 324 (PMCNTCGKVFSEASSLRRHMRIH), 330 to 352 (YVCHLCGKAFTQCNQLKTHVRTH), 358 to 381 (YKCELCDKGFAQKCQLVFHSRMHH), 387 to 409 (YKCDVCNLQFATSSNLKIHARKH), 415 to 437 (YVCDRCGQRFAQASTLTYHVRRH), 443 to 465 (YVCDTCGKAFAVSSSLITHSRKH), 471 to 493 (YICGICGKSFISSGELNKHFRSH), and 499 to 522 (FICELCGNSYTDIKNLKKHKTKVH). The tract at residues 521-556 (VHSGADKTLDSSAEDHTLSEQDSIQKSPLSETMDVK) is disordered. Residues 523 to 539 (SGADKTLDSSAEDHTLS) are compositionally biased toward basic and acidic residues. Polar residues predominate over residues 540-550 (EQDSIQKSPLS).

The protein belongs to the krueppel C2H2-type zinc-finger protein family. Mainly expressed in the neuromuscular system. Located in and around synaptic myonuclei in adult muscle. Expression is dysregulated after nerve injury. Also found in the testis, ovary and placenta.

It localises to the nucleus. In Homo sapiens (Human), this protein is Myoneurin (MYNN).